We begin with the raw amino-acid sequence, 162 residues long: Fibroblast growth factor 22 (162 aa).

A signal peptide spans 1 to 22 (MRSRLWLGLAWLLLARAPGAPG).

This sequence belongs to the heparin-binding growth factors family. As to quaternary structure, interacts with FGFR1 and FGFR2. Interacts with FGFBP1. As to expression, preferentially expressed in skin; low expression in brain. Expressed in the inner root sheath of the hair follicle.

Its subcellular location is the secreted. In terms of biological role, plays a role in the fasting response, glucose homeostasis, lipolysis and lipogenesis. Can stimulate cell proliferation (in vitro). May be involved in hair development. The sequence is that of Fibroblast growth factor 22 (Fgf22) from Mus musculus (Mouse).